Here is a 231-residue protein sequence, read N- to C-terminus: Coproheme decarboxylase (231 aa).

Residue K44 forms an Isoglutamyl lysine isopeptide (Lys-Gln) (interchain with Q-Cter in protein Pup) linkage. Y133 is an active-site residue. H156 is a Fe-coproporphyrin III binding site.

It belongs to the ChdC family. Type 2 subfamily. Requires Fe-coproporphyrin III as cofactor.

The enzyme catalyses Fe-coproporphyrin III + 2 H2O2 + 2 H(+) = heme b + 2 CO2 + 4 H2O. It carries out the reaction Fe-coproporphyrin III + H2O2 + H(+) = harderoheme III + CO2 + 2 H2O. It catalyses the reaction harderoheme III + H2O2 + H(+) = heme b + CO2 + 2 H2O. It functions in the pathway porphyrin-containing compound metabolism; protoheme biosynthesis. Its function is as follows. Involved in coproporphyrin-dependent heme b biosynthesis. Catalyzes the decarboxylation of Fe-coproporphyrin III (coproheme) to heme b (protoheme IX), the last step of the pathway. The reaction occurs in a stepwise manner with a three-propionate intermediate. In Mycolicibacterium smegmatis (strain ATCC 700084 / mc(2)155) (Mycobacterium smegmatis), this protein is Coproheme decarboxylase.